Reading from the N-terminus, the 348-residue chain is Ribonuclease H (348 aa).

Residues 54-65 (NTTSNYGSSTHA) are compositionally biased toward polar residues. Positions 54–81 (NTTSNYGSSTHAGGQVSKPHTTQKRVHR) are disordered. One can recognise an RNase H type-1 domain in the interval 184 to 346 (YNKSMNVYCD…ADFLAKKGAS (163 aa)). Positions 193, 235, 264, and 338 each coordinate Mg(2+).

Belongs to the RNase H family. Mg(2+) is required as a cofactor.

The catalysed reaction is Endonucleolytic cleavage to 5'-phosphomonoester.. In terms of biological role, endonuclease that specifically degrades the RNA of RNA-DNA hybrids. This chain is Ribonuclease H (RNH1), found in Saccharomyces cerevisiae (strain ATCC 204508 / S288c) (Baker's yeast).